The sequence spans 92 residues: Toxin RelE3 (92 aa).

Belongs to the RelE toxin family.

In terms of biological role, toxic component of a type II toxin-antitoxin (TA) system. Its toxic effect is neutralized by coexpression with cognate antitoxin RelB3 but no other ParD or RelB antitoxin. This chain is Toxin RelE3 (relE3), found in Caulobacter vibrioides (strain ATCC 19089 / CIP 103742 / CB 15) (Caulobacter crescentus).